The chain runs to 510 residues: NAD(P)H-quinone oxidoreductase subunit 2 A, chloroplastic (510 aa).

13 helical membrane-spanning segments follow: residues 24–44 (LLLF…GLIL), 57–77 (IPWL…ALLF), 99–119 (IFQF…VEYI), 124–144 (MAIT…MFLC), 149–169 (LITI…LSGY), 183–203 (YLLM…WLYG), 227–247 (PGIS…LSPA), 295–315 (WHLL…LIAI), 323–343 (MLAY…IVGD), 347–367 (GYAS…GTFA), 395–415 (ALSS…AGFF), 418–438 (LHLF…IGLL), and 484–504 (MIVC…IIAI).

It belongs to the complex I subunit 2 family. In terms of assembly, NDH is composed of at least 16 different subunits, 5 of which are encoded in the nucleus.

Its subcellular location is the plastid. The protein localises to the chloroplast thylakoid membrane. It catalyses the reaction a plastoquinone + NADH + (n+1) H(+)(in) = a plastoquinol + NAD(+) + n H(+)(out). The catalysed reaction is a plastoquinone + NADPH + (n+1) H(+)(in) = a plastoquinol + NADP(+) + n H(+)(out). Its function is as follows. NDH shuttles electrons from NAD(P)H:plastoquinone, via FMN and iron-sulfur (Fe-S) centers, to quinones in the photosynthetic chain and possibly in a chloroplast respiratory chain. The immediate electron acceptor for the enzyme in this species is believed to be plastoquinone. Couples the redox reaction to proton translocation, and thus conserves the redox energy in a proton gradient. The polypeptide is NAD(P)H-quinone oxidoreductase subunit 2 A, chloroplastic (Platanus occidentalis (Sycamore)).